A 150-amino-acid chain; its full sequence is S-protein homolog 3 (150 aa).

A signal peptide spans methionine 1–serine 23. N-linked (GlcNAc...) asparagine glycosylation is found at asparagine 32 and asparagine 70.

This sequence belongs to the plant self-incompatibility (S1) protein family.

Its subcellular location is the secreted. The protein is S-protein homolog 3 of Arabidopsis thaliana (Mouse-ear cress).